The chain runs to 490 residues: Cobyric acid synthase (490 aa).

A GATase cobBQ-type domain is found at 252–439 (RLKVVVPVLP…LHGLFESTAA (188 aa)). C333 functions as the Nucleophile in the catalytic mechanism. The active site involves H431.

This sequence belongs to the CobB/CobQ family. CobQ subfamily.

The protein operates within cofactor biosynthesis; adenosylcobalamin biosynthesis. Its function is as follows. Catalyzes amidations at positions B, D, E, and G on adenosylcobyrinic A,C-diamide. NH(2) groups are provided by glutamine, and one molecule of ATP is hydrogenolyzed for each amidation. This chain is Cobyric acid synthase, found in Pseudomonas aeruginosa (strain UCBPP-PA14).